We begin with the raw amino-acid sequence, 285 residues long: 3',5'-nucleoside bisphosphate phosphatase (285 aa).

Positions 7, 9, 14, 39, 64, and 75 each coordinate Mn(2+). 2 residues coordinate substrate: aspartate 14 and histidine 39. Residues 99–102 (RLER) and 134–135 (RT) each bind substrate. Histidine 191, aspartate 248, and histidine 250 together coordinate Mn(2+). Histidine 250 is a binding site for substrate.

It belongs to the PHP family. Monomer. Mn(2+) serves as cofactor.

It catalyses the reaction a ribonucleoside 3',5'-bisphosphate + H2O = a ribonucleoside 5'-phosphate + phosphate. Its function is as follows. Hydrolyzes 3',5'-bisphosphonucleosides (pGp, pCp, pUp, and pIp) to nucleoside 5'-phosphate and orthophosphate. Has similar catalytic efficiencies with all the bases. Also shows activity with ribonucleoside 2'-deoxyribonucleoside 3',5'-bisphosphates. Does not show activity with nucleoside 2',5'-bisphosphates. The chain is 3',5'-nucleoside bisphosphate phosphatase from Chromobacterium violaceum (strain ATCC 12472 / DSM 30191 / JCM 1249 / CCUG 213 / NBRC 12614 / NCIMB 9131 / NCTC 9757 / MK).